Reading from the N-terminus, the 121-residue chain is MLTKKEQRLRRSRQTRIRIAQQGVVRLTVNRTNLHIYASVISEDGSRVLASASTAEAEVRKELGGSGKGGNAAAAQMIGKRIAEKAKAAGIEKVAFDRAGFAYHGRVKALAEAAREAGLQF.

It belongs to the universal ribosomal protein uL18 family. Part of the 50S ribosomal subunit; part of the 5S rRNA/L5/L18/L25 subcomplex. Contacts the 5S and 23S rRNAs.

Its function is as follows. This is one of the proteins that bind and probably mediate the attachment of the 5S RNA into the large ribosomal subunit, where it forms part of the central protuberance. This chain is Large ribosomal subunit protein uL18, found in Paracidovorax citrulli (strain AAC00-1) (Acidovorax citrulli).